Here is a 380-residue protein sequence, read N- to C-terminus: 3-dehydroquinate synthase (380 aa).

NAD(+)-binding positions include 68 to 73 (PGEPNK), 102 to 106 (GTVLD), 126 to 127 (TT), K139, and K148. Zn(2+)-binding residues include E181, H243, and H259.

It belongs to the sugar phosphate cyclases superfamily. Dehydroquinate synthase family. NAD(+) serves as cofactor. The cofactor is Co(2+). Requires Zn(2+) as cofactor.

It is found in the cytoplasm. It catalyses the reaction 7-phospho-2-dehydro-3-deoxy-D-arabino-heptonate = 3-dehydroquinate + phosphate. The protein operates within metabolic intermediate biosynthesis; chorismate biosynthesis; chorismate from D-erythrose 4-phosphate and phosphoenolpyruvate: step 2/7. Its function is as follows. Catalyzes the conversion of 3-deoxy-D-arabino-heptulosonate 7-phosphate (DAHP) to dehydroquinate (DHQ). The chain is 3-dehydroquinate synthase (aroB) from Chlamydia pneumoniae (Chlamydophila pneumoniae).